We begin with the raw amino-acid sequence, 236 residues long: Rho-related GTP-binding protein RhoV (236 aa).

Positions 1–27 are disordered; that stretch reads MPPRELSEAEPPPLPASTPPPRRRSAP. Residues 10 to 20 are compositionally biased toward pro residues; it reads EPPPLPASTPP. S25 is modified (phosphoserine). Residues 38–45, 85–89, and 143–146 each bind GTP; these read GDGAVGKS, DTAGQ, and TQAD. The S-palmitoyl cysteine moiety is linked to residue C234.

Belongs to the small GTPase superfamily. Rho family. In terms of assembly, interacts with PAK2. The cofactor is Mg(2+).

The protein localises to the cell membrane. It is found in the endosome membrane. Its function is as follows. Plays a role in the control of the actin cytoskeleton via activation of the JNK pathway. This Mus musculus (Mouse) protein is Rho-related GTP-binding protein RhoV.